The primary structure comprises 427 residues: Tol-Pal system protein TolB (427 aa).

Residues methionine 1 to alanine 23 form the signal peptide.

Belongs to the TolB family. In terms of assembly, the Tol-Pal system is composed of five core proteins: the inner membrane proteins TolA, TolQ and TolR, the periplasmic protein TolB and the outer membrane protein Pal. They form a network linking the inner and outer membranes and the peptidoglycan layer.

The protein localises to the periplasm. Functionally, part of the Tol-Pal system, which plays a role in outer membrane invagination during cell division and is important for maintaining outer membrane integrity. This Actinobacillus succinogenes (strain ATCC 55618 / DSM 22257 / CCUG 43843 / 130Z) protein is Tol-Pal system protein TolB.